The primary structure comprises 396 residues: 3-hydroxykynurenine transaminase (396 aa).

Residues 43-44 (SN) form a binds to and confers specificity for 3-hydroxykynurenine; shared with dimeric partner region. Residues 77-79 (SAH), Ser-154, and Gln-204 each bind pyridoxal 5'-phosphate. Substrate is bound at residue Ser-154. Lys-205 is subject to N6-(pyridoxal phosphate)lysine. Pyridoxal 5'-phosphate-binding residues include Tyr-256 and Thr-259. Arg-356 serves as a coordination point for substrate.

Belongs to the class-V pyridoxal-phosphate-dependent aminotransferase family. Homodimer. It depends on pyridoxal 5'-phosphate as a cofactor. Expressed in gut and ovaries.

The protein localises to the peroxisome. It carries out the reaction L-kynurenine + glyoxylate = kynurenate + glycine + H2O. The enzyme catalyses 3-hydroxy-L-kynurenine + glyoxylate = xanthurenate + glycine + H2O. It catalyses the reaction 3-hydroxy-L-kynurenine + pyruvate = xanthurenate + L-alanine + H2O. The catalysed reaction is glyoxylate + L-alanine = glycine + pyruvate. The protein operates within amino-acid degradation; L-kynurenine degradation; kynurenate from L-kynurenine: step 1/2. Functionally, catalyzes the pyridoxal 5'-phosphate-dependent transamination of both 3-hydroxykynurenine and L-kynurenine to xanthurenic acid and kynurenic acid, respectively, preferentially using the alpha-ketoacid glyoxylate as the amino group acceptor. Although glyoxylate is the preferred amino group acceptor, transamination of 3-hydroxykynurenine also works with pyruvate as the amino acceptor in vitro. Involved in the detoxification of cytotoxic metabolite 3-hydroxykynurenine generated by the hydroxylation of L-kynurenine, an intermediate in the tryptophan catabolism pathway. The Plasmodium parasite uses xanthurenic acid produced in the midgut to activate its gametocytes ingested during a blood meal. Also catalyzes, although with a lesser efficiency, the transamination of alanine with glyoxylate as an amino group acceptor. May play a role in the detoxification of glyoxylate, a toxic plant metabolite from the diet. The chain is 3-hydroxykynurenine transaminase from Anopheles gambiae (African malaria mosquito).